The chain runs to 127 residues: Glycine cleavage system H protein (127 aa).

The region spanning 22 to 104 is the Lipoyl-binding domain; that stretch reads KVRIGITDFA…YEKAWMIVVE (83 aa). Residue Lys-63 is modified to N6-lipoyllysine.

Belongs to the GcvH family. The glycine cleavage system is composed of four proteins: P, T, L and H. (R)-lipoate is required as a cofactor.

Functionally, the glycine cleavage system catalyzes the degradation of glycine. The H protein shuttles the methylamine group of glycine from the P protein to the T protein. In terms of biological role, is also involved in protein lipoylation via its role as an octanoyl/lipoyl carrier protein intermediate. This Geobacillus sp. (strain WCH70) protein is Glycine cleavage system H protein.